The chain runs to 219 residues: Ribose-5-phosphate isomerase A (219 aa).

Substrate-binding positions include 28 to 31 (SGST), 81 to 84 (DGAD), and 94 to 97 (KGGG). Glutamate 103 (proton acceptor) is an active-site residue. Lysine 121 provides a ligand contact to substrate.

Belongs to the ribose 5-phosphate isomerase family. As to quaternary structure, homodimer.

It catalyses the reaction aldehydo-D-ribose 5-phosphate = D-ribulose 5-phosphate. The protein operates within carbohydrate degradation; pentose phosphate pathway; D-ribose 5-phosphate from D-ribulose 5-phosphate (non-oxidative stage): step 1/1. Functionally, catalyzes the reversible conversion of ribose-5-phosphate to ribulose 5-phosphate. The polypeptide is Ribose-5-phosphate isomerase A (Histophilus somni (strain 2336) (Haemophilus somnus)).